Consider the following 556-residue polypeptide: CDP-diacylglycerol--glycerol-3-phosphate 3-phosphatidyltransferase, mitochondrial (556 aa).

Residues 1–28 constitute a mitochondrion transit peptide; the sequence is MAAAAAAAAGPVFWRRLLGLLPGRPGLA. Residue Ser-49 is modified to Phosphoserine. Residue 124–131 coordinates ATP; sequence ASLYLGIG. PLD phosphodiesterase domains follow at residues 215–241 and 419–457; these read TIGLQHIKVYLFDNNVILSGANLSDSY and FGAKGVAGAIPAAYVHIERQFYSEVCSLGQQERVQLQEY. Active-site residues include His-220, Lys-222, and Asp-227.

Belongs to the CDP-alcohol phosphatidyltransferase class-II family.

The protein localises to the mitochondrion. The catalysed reaction is a CDP-1,2-diacyl-sn-glycerol + sn-glycerol 3-phosphate = a 1,2-diacyl-sn-glycero-3-phospho-(1'-sn-glycero-3'-phosphate) + CMP + H(+). It functions in the pathway phospholipid metabolism; phosphatidylglycerol biosynthesis; phosphatidylglycerol from CDP-diacylglycerol: step 1/2. With respect to regulation, activated by calcium and magnesium and inhibited by other bivalent cations. In terms of biological role, functions in the biosynthesis of the anionic phospholipids phosphatidylglycerol and cardiolipin. In Bos taurus (Bovine), this protein is CDP-diacylglycerol--glycerol-3-phosphate 3-phosphatidyltransferase, mitochondrial (PGS1).